Here is a 520-residue protein sequence, read N- to C-terminus: Fusaridione A cluster transcription factor fsdR (520 aa).

The interval 1–30 (MSTGPPSGISLVSMTTPRKSGQHTPESWSK) is disordered.

Its subcellular location is the nucleus. Functionally, transcription factor that regulates the expression of the gene cluster that mediates the biosynthesis of fusaridione A. This chain is Fusaridione A cluster transcription factor fsdR, found in Fusarium heterosporum.